Here is a 429-residue protein sequence, read N- to C-terminus: Ribosomal RNA small subunit methyltransferase B (429 aa).

S-adenosyl-L-methionine is bound by residues 254-260, D277, D303, and D322; that span reads CAAPGGK. The active-site Nucleophile is C375. A disordered region spans residues 397–419; that stretch reads ALSETGTPDQPGQQNLPGGEEGD. Residues 400–412 show a composition bias toward polar residues; the sequence is ETGTPDQPGQQNL.

Belongs to the class I-like SAM-binding methyltransferase superfamily. RsmB/NOP family.

It localises to the cytoplasm. The catalysed reaction is cytidine(967) in 16S rRNA + S-adenosyl-L-methionine = 5-methylcytidine(967) in 16S rRNA + S-adenosyl-L-homocysteine + H(+). In terms of biological role, specifically methylates the cytosine at position 967 (m5C967) of 16S rRNA. This Salmonella agona (strain SL483) protein is Ribosomal RNA small subunit methyltransferase B.